The following is a 171-amino-acid chain: Actin-related protein 2/3 complex subunit 4 (171 aa).

The protein belongs to the ARPC4 family. As to quaternary structure, component of the Arp2/3 complex composed of ARP2, ARP3, ARC40/p41-ARC, ARC35/p34-ARC, ARC18/p21-ARC, ARC19/p20-ARC and ARC16/p16-ARC.

The protein resides in the cytoplasm. The protein localises to the cytoskeleton. It localises to the actin patch. In terms of biological role, functions as actin-binding component of the Arp2/3 complex which is involved in regulation of actin polymerization and together with an activating nucleation-promoting factor (NPF) mediates the formation of branched actin networks. Seems to contact the mother actin filament. This chain is Actin-related protein 2/3 complex subunit 4 (ARC19), found in Saccharomyces cerevisiae (strain ATCC 204508 / S288c) (Baker's yeast).